Reading from the N-terminus, the 129-residue chain is Small ribosomal subunit protein uS11 (129 aa).

The protein belongs to the universal ribosomal protein uS11 family. Part of the 30S ribosomal subunit. Interacts with proteins S7 and S18. Binds to IF-3.

Functionally, located on the platform of the 30S subunit, it bridges several disparate RNA helices of the 16S rRNA. Forms part of the Shine-Dalgarno cleft in the 70S ribosome. This Carboxydothermus hydrogenoformans (strain ATCC BAA-161 / DSM 6008 / Z-2901) protein is Small ribosomal subunit protein uS11.